The chain runs to 89 residues: Small ribosomal subunit protein bS20 (89 aa).

The segment at 1–20 (MANHKSAEKRARQTIKRTER) is disordered.

It belongs to the bacterial ribosomal protein bS20 family.

Binds directly to 16S ribosomal RNA. This chain is Small ribosomal subunit protein bS20, found in Campylobacter curvus (strain 525.92).